The sequence spans 180 residues: Protein sll1483 (180 aa).

A signal peptide spans 1–26; it reads MKTAARIVAFTALTGFALGMPTVAMA. An FAS1 domain is found at 45–176; it reads AMTIVEVAAG…GVIHVIDQVI (132 aa).

The sequence is that of Protein sll1483 from Synechocystis sp. (strain ATCC 27184 / PCC 6803 / Kazusa).